A 25-amino-acid polypeptide reads, in one-letter code: Caerin-1.5 (25 aa).

Residue leucine 25 is modified to Leucine amide.

In terms of tissue distribution, expressed by the skin parotoid and/or rostral glands.

The protein localises to the secreted. Antibacterial peptide, that adopts an alpha helical conformation which can disrupt bacterial membranes. Each caerin displays a different antimicrobial specificity. The sequence is that of Caerin-1.5 from Ranoidea caerulea (Green tree frog).